We begin with the raw amino-acid sequence, 354 residues long: UDP-2,3-diacetamido-2,3-dideoxy-D-glucuronate 2-epimerase (354 aa).

The protein belongs to the UDP-N-acetylglucosamine 2-epimerase family.

It catalyses the reaction UDP-2,3-diacetamido-2,3-dideoxy-alpha-D-glucuronate = UDP-2,3-diacetamido-2,3-dideoxy-alpha-D-mannuronate. Its pathway is bacterial outer membrane biogenesis; LPS O-antigen biosynthesis. Its function is as follows. Plays a role in the biosynthesis of B-band O antigen for serotype O5. Catalyzes the epimerization of UDP-2,3-diacetamido-2,3-dideoxy-alpha-D-glucuronic acid (UDP-alpha-D-GlcNAc3NAcA) to UDP-2,3-diacetamido-2,3-dideoxy-alpha-D-mannuronic acid (UDP-alpha-D-ManNAc3NAcA). Exhibits high specificity towards the substrate as UDP-alpha-D-GlcNAc, UDP-alpha-D-GlcNAcA (UDP-2-acetamido-2-deoxy-alpha-D-glucuronic acid) and UDP-alpha-D-GlcNAc3NAc (UDP-2,3-diacetamido-2,3-dideoxy-alpha-D-glucose) cannot act as substrates. The sequence is that of UDP-2,3-diacetamido-2,3-dideoxy-D-glucuronate 2-epimerase from Pseudomonas aeruginosa (strain ATCC 15692 / DSM 22644 / CIP 104116 / JCM 14847 / LMG 12228 / 1C / PRS 101 / PAO1).